Consider the following 423-residue polypeptide: MPQFGILCKTPPKVLVRQFVERFERPSGEKIALCAAELTYLCWMITHNGTAIKRATFMSYNTIISNSLSFDIVNKSLQFKYKTQKATILEASLKKLIPAWEFTIIPYYGQKHQSDITDIVSSLQLQFESSEEADKGNSHSKKMLKALLSEGESIWEITEKILNSFEYTSRFTKTKTLYQFLFLATFINCGRFSDIKNVDPKSFKLVQNKYLGVIIQCLVTETKTSVSRHIYFFSARGRIDPLVYLDEFLRNSEPVLKRVNRTGNSSSNKQEYQLLKDNLVRSYNKALKKNAPYSIFAIKNGPKSHIGRHLMTSFLSMKGLTELTNVVGNWSDKRASAVARTTYTHQITAIPDHYFALVSRYYAYDPISKEMIALKDETNPIEEWQHIEQLKGSAEGSIRYPAWNGIISQEVLDYLSSYINRRI.

In terms of domain architecture, Tyr recombinase Flp-type spans 136-422 (GNSHSKKMLK…DYLSSYINRR (287 aa)). The active-site O-(3'-phospho-DNA)-tyrosine intermediate is the Tyr-343.

Belongs to the 'phage' integrase family. As to quaternary structure, homotetramer.

Part of the plasmid amplification system, which corrects any decrease in copy number caused by a rare missegregation event. Catalyzes the recombination between the large inverted repetitions of the 2-micron plasmid during plasmid replication. This recombination event changes the direction of one of the two replication forks in the bidirectionally replicating molecule, effectively resulting in multiple rounds of replication from a single initiation event. Binds specifically to the FLP recognition target (FRT) site where it induces DNA to bend. Three types of bend exist. Type I is approximately 60 degrees and results from 1 FLP molecule binding to 1 symmetry element. Type II is &gt;144 degrees and results from FLP molecules binding to symmetry elements a and b. Type III is approximately 65 degrees and results from FLP molecules binding to symmetry elements b and c. The chain is Site-specific recombinase Flp (FLP1) from Saccharomyces cerevisiae (strain ATCC 204508 / S288c) (Baker's yeast).